The sequence spans 203 residues: LexA repressor (203 aa).

The H-T-H motif DNA-binding region spans 30-50 (VREICQAVSLKSTSTVHGHLK). Residues Ser-127 and Lys-164 each act as for autocatalytic cleavage activity in the active site.

The protein belongs to the peptidase S24 family. As to quaternary structure, homodimer.

It carries out the reaction Hydrolysis of Ala-|-Gly bond in repressor LexA.. Functionally, represses a number of genes involved in the response to DNA damage (SOS response), including recA and lexA. In the presence of single-stranded DNA, RecA interacts with LexA causing an autocatalytic cleavage which disrupts the DNA-binding part of LexA, leading to derepression of the SOS regulon and eventually DNA repair. The protein is LexA repressor of Clostridium perfringens (strain 13 / Type A).